We begin with the raw amino-acid sequence, 315 residues long: L-lactate dehydrogenase (315 aa).

The NAD(+) site is built by V12, D33, and Y65. Substrate-binding positions include Q82, R88, and 120–123 (NPVD). NAD(+) is bound by residues 118-120 (ISN) and S143. 148–151 (DTSR) serves as a coordination point for substrate. Positions 153 and 168 each coordinate beta-D-fructose 1,6-bisphosphate. Residue H175 is the Proton acceptor of the active site. A Phosphotyrosine modification is found at Y219. T228 contributes to the substrate binding site.

This sequence belongs to the LDH/MDH superfamily. LDH family. As to quaternary structure, homotetramer.

It is found in the cytoplasm. The catalysed reaction is (S)-lactate + NAD(+) = pyruvate + NADH + H(+). The protein operates within fermentation; pyruvate fermentation to lactate; (S)-lactate from pyruvate: step 1/1. Its activity is regulated as follows. Allosterically activated by fructose 1,6-bisphosphate (FBP). Functionally, catalyzes the conversion of lactate to pyruvate. In Mycoplasmopsis pulmonis (strain UAB CTIP) (Mycoplasma pulmonis), this protein is L-lactate dehydrogenase.